Here is a 568-residue protein sequence, read N- to C-terminus: MNTLIAQIEKGKPFFEKISRNIYLRAIRDGFISAMPVILFSSIFLLIAYVPNIFGFTWPKGIENMLMTPYNYTMGIIGFLVAGTTAKSLTDSMNRQLEKTNQINFISTMLASMAGFLIMAADPAKEGGFLSAFMGTKGLLTAFIAAFITVNVYKICVKNNVTIRMPEEVPPNISQVFKDIFPFAFSIIILYAIQLAIKAVIGVNVAQSIGTLLAPLFSAADGYLGITIIFGAYALFWFVGIHGPSIVEPAIAAITYSNVELNAHLIHAGQHADKVITSGTQMFIVTMGGTGATLVVPFMFMWLCKSKRNKAIGRASVVPTFFGVNEPILFGAPIVLNPVFFIPFILAPIVNVWIFKFFVDTLGMNSFFANLPWTTPGPIGIVLGTGFAVLSFVLAALLILVDTVIYYPFVKVYDEQILAEEAEGKSSSDALKEKVAANFDTKKADAILEGAESKEEPATHAITEETNVLVLCAGGGTSGLLANALNKAAEEYGAPVKAAAGSYGAHREILDQYQLVILAPQVASNYEDMKAETDKLGIKLAKTEGAQYIGLTRDGKGALAFVEEQFKD.

The PTS EIIC type-3 domain maps to 8 to 409 (IEKGKPFFEK…LVDTVIYYPF (402 aa)). Transmembrane regions (helical) follow at residues 30-50 (GFISAMPVILFSSIFLLIAYV), 65-85 (MLMTPYNYTMGIIGFLVAGTT), 103-123 (INFISTMLASMAGFLIMAADP), 128-148 (GFLSAFMGTKGLLTAFIAAFI), 183-203 (FAFSIIILYAIQLAIKAVIGV), 222-242 (GYLGITIIFGAYALFWFVGIH), 246-266 (IVEPAIAAITYSNVELNAHLI), 283-303 (FIVTMGGTGATLVVPFMFMWL), 339-359 (VFFIPFILAPIVNVWIFKFFV), and 381-401 (IVLGTGFAVLSFVLAALLILV). The PTS EIIB type-3 domain occupies 465-568 (ETNVLVLCAG…LAFVEEQFKD (104 aa)). The active-site Phosphocysteine intermediate; for EIIB activity is Cys-472. Position 472 is a phosphocysteine; by EIIA (Cys-472).

The protein localises to the cell membrane. The catalysed reaction is lactose(out) + N(pros)-phospho-L-histidyl-[protein] = lactose 6-phosphate(in) + L-histidyl-[protein]. Its function is as follows. The phosphoenolpyruvate-dependent sugar phosphotransferase system (sugar PTS), a major carbohydrate active transport system, catalyzes the phosphorylation of incoming sugar substrates concomitantly with their translocation across the cell membrane. The enzyme II LacEF PTS system is involved in lactose transport. The polypeptide is PTS system lactose-specific EIICB component (Streptococcus mutans serotype c (strain ATCC 700610 / UA159)).